Reading from the N-terminus, the 96-residue chain is Phosphoribosyl-ATP pyrophosphatase (96 aa).

The protein belongs to the PRA-PH family.

It localises to the cytoplasm. The enzyme catalyses 1-(5-phospho-beta-D-ribosyl)-ATP + H2O = 1-(5-phospho-beta-D-ribosyl)-5'-AMP + diphosphate + H(+). It participates in amino-acid biosynthesis; L-histidine biosynthesis; L-histidine from 5-phospho-alpha-D-ribose 1-diphosphate: step 2/9. The protein is Phosphoribosyl-ATP pyrophosphatase of Methanococcus vannielii (strain ATCC 35089 / DSM 1224 / JCM 13029 / OCM 148 / SB).